We begin with the raw amino-acid sequence, 90 residues long: Probable Fe(2+)-trafficking protein (90 aa).

It belongs to the Fe(2+)-trafficking protein family.

In terms of biological role, could be a mediator in iron transactions between iron acquisition and iron-requiring processes, such as synthesis and/or repair of Fe-S clusters in biosynthetic enzymes. This chain is Probable Fe(2+)-trafficking protein, found in Vibrio atlanticus (strain LGP32) (Vibrio splendidus (strain Mel32)).